A 68-amino-acid chain; its full sequence is Conotoxin Mr3.4 (68 aa).

A signal peptide spans 1-19 (MSKLGVLLTICLLLFPLTA). A propeptide spanning residues 20-49 (VPLDGDQPADRPAERMQDDISSERHPFFDR) is cleaved from the precursor. Disulfide bonds link cysteine 53–cysteine 67, cysteine 54–cysteine 63, and cysteine 59–cysteine 66. The residue at position 65 (proline 65) is a 4-hydroxyproline.

Belongs to the conotoxin M superfamily. In terms of tissue distribution, expressed by the venom duct.

The protein resides in the secreted. In Conus marmoreus (Marble cone), this protein is Conotoxin Mr3.4.